A 138-amino-acid chain; its full sequence is Ribosome-binding factor A (138 aa).

Residues 112–138 (EARTQGQEPAADVEPAPGAAPDDEAEE) are disordered. Positions 119–131 (EPAADVEPAPGAA) are enriched in low complexity.

This sequence belongs to the RbfA family. As to quaternary structure, monomer. Binds 30S ribosomal subunits, but not 50S ribosomal subunits or 70S ribosomes.

The protein localises to the cytoplasm. Its function is as follows. One of several proteins that assist in the late maturation steps of the functional core of the 30S ribosomal subunit. Associates with free 30S ribosomal subunits (but not with 30S subunits that are part of 70S ribosomes or polysomes). Required for efficient processing of 16S rRNA. May interact with the 5'-terminal helix region of 16S rRNA. This Anaeromyxobacter dehalogenans (strain 2CP-C) protein is Ribosome-binding factor A.